Here is a 529-residue protein sequence, read N- to C-terminus: Bifunctional purine biosynthesis protein PurH (529 aa).

Residues 1-148 (MQPPRPVRRA…KNHKDVAIVV (148 aa)) form the MGS-like domain.

Belongs to the PurH family.

It carries out the reaction (6R)-10-formyltetrahydrofolate + 5-amino-1-(5-phospho-beta-D-ribosyl)imidazole-4-carboxamide = 5-formamido-1-(5-phospho-D-ribosyl)imidazole-4-carboxamide + (6S)-5,6,7,8-tetrahydrofolate. It catalyses the reaction IMP + H2O = 5-formamido-1-(5-phospho-D-ribosyl)imidazole-4-carboxamide. It participates in purine metabolism; IMP biosynthesis via de novo pathway; 5-formamido-1-(5-phospho-D-ribosyl)imidazole-4-carboxamide from 5-amino-1-(5-phospho-D-ribosyl)imidazole-4-carboxamide (10-formyl THF route): step 1/1. It functions in the pathway purine metabolism; IMP biosynthesis via de novo pathway; IMP from 5-formamido-1-(5-phospho-D-ribosyl)imidazole-4-carboxamide: step 1/1. In Sodalis glossinidius (strain morsitans), this protein is Bifunctional purine biosynthesis protein PurH.